The sequence spans 108 residues: E3 ubiquitin-protein ligase Midline-1 (108 aa).

The 100-residue stretch at K1–H100 folds into the B30.2/SPRY domain.

The protein belongs to the TRIM/RBCC family. In terms of assembly, homodimer or heterodimer with MID2. Interacts with IGBP1.

It localises to the cytoplasm. It is found in the cytoskeleton. It carries out the reaction S-ubiquitinyl-[E2 ubiquitin-conjugating enzyme]-L-cysteine + [acceptor protein]-L-lysine = [E2 ubiquitin-conjugating enzyme]-L-cysteine + N(6)-ubiquitinyl-[acceptor protein]-L-lysine.. Its function is as follows. Has E3 ubiquitin ligase activity towards IGBP1, promoting its monoubiquitination, which results in deprotection of the catalytic subunit of protein phosphatase PP2A, and its subsequent degradation by polyubiquitination. This is E3 ubiquitin-protein ligase Midline-1 (Mid1) from Mus caroli (Ryukyu mouse).